A 243-amino-acid chain; its full sequence is 1-(5-phosphoribosyl)-5-[(5-phosphoribosylamino)methylideneamino] imidazole-4-carboxamide isomerase (243 aa).

D8 functions as the Proton acceptor in the catalytic mechanism. D129 acts as the Proton donor in catalysis.

The protein belongs to the HisA/HisF family.

Its subcellular location is the cytoplasm. It catalyses the reaction 1-(5-phospho-beta-D-ribosyl)-5-[(5-phospho-beta-D-ribosylamino)methylideneamino]imidazole-4-carboxamide = 5-[(5-phospho-1-deoxy-D-ribulos-1-ylimino)methylamino]-1-(5-phospho-beta-D-ribosyl)imidazole-4-carboxamide. The protein operates within amino-acid biosynthesis; L-histidine biosynthesis; L-histidine from 5-phospho-alpha-D-ribose 1-diphosphate: step 4/9. This chain is 1-(5-phosphoribosyl)-5-[(5-phosphoribosylamino)methylideneamino] imidazole-4-carboxamide isomerase, found in Brucella suis biovar 1 (strain 1330).